Reading from the N-terminus, the 200-residue chain is AP-5 complex subunit sigma-1 (200 aa).

Probably part of the adaptor protein complex 5 (AP-5) a tetramer composed of AP5B1, AP5M1, AP5S1 and AP5Z1. Interacts with ZFYVE26 and SPG11.

The protein resides in the cytoplasm. It is found in the cytosol. Its subcellular location is the late endosome membrane. It localises to the lysosome membrane. In terms of biological role, as part of AP-5, a probable fifth adaptor protein complex it may be involved in endosomal transport. According to PubMed:20613862, it is required for efficient homologous recombination DNA double-strand break repair. The polypeptide is AP-5 complex subunit sigma-1 (AP5S1) (Homo sapiens (Human)).